Here is a 336-residue protein sequence, read N- to C-terminus: Holliday junction branch migration complex subunit RuvB (336 aa).

The tract at residues 1 to 185 is large ATPase domain (RuvB-L); sequence MSIIVERLLS…FGVLSRVEYY (185 aa). Residues Leu24, Arg25, Gly66, Lys69, Thr70, Thr71, 132-134, Arg175, Tyr185, and Arg222 contribute to the ATP site; that span reads EDF. Thr70 is a binding site for Mg(2+). The small ATPAse domain (RuvB-S) stretch occupies residues 186–256; the sequence is TVDQLSAIVE…ITQMALELLQ (71 aa). A head domain (RuvB-H) region spans residues 259 to 336; it reads KLGLDHIDHK…EHFGMEIPKV (78 aa). DNA-binding residues include Arg314 and Arg319.

The protein belongs to the RuvB family. Homohexamer. Forms an RuvA(8)-RuvB(12)-Holliday junction (HJ) complex. HJ DNA is sandwiched between 2 RuvA tetramers; dsDNA enters through RuvA and exits via RuvB. An RuvB hexamer assembles on each DNA strand where it exits the tetramer. Each RuvB hexamer is contacted by two RuvA subunits (via domain III) on 2 adjacent RuvB subunits; this complex drives branch migration. In the full resolvosome a probable DNA-RuvA(4)-RuvB(12)-RuvC(2) complex forms which resolves the HJ.

It localises to the cytoplasm. It catalyses the reaction ATP + H2O = ADP + phosphate + H(+). Its function is as follows. The RuvA-RuvB-RuvC complex processes Holliday junction (HJ) DNA during genetic recombination and DNA repair, while the RuvA-RuvB complex plays an important role in the rescue of blocked DNA replication forks via replication fork reversal (RFR). RuvA specifically binds to HJ cruciform DNA, conferring on it an open structure. The RuvB hexamer acts as an ATP-dependent pump, pulling dsDNA into and through the RuvAB complex. RuvB forms 2 homohexamers on either side of HJ DNA bound by 1 or 2 RuvA tetramers; 4 subunits per hexamer contact DNA at a time. Coordinated motions by a converter formed by DNA-disengaged RuvB subunits stimulates ATP hydrolysis and nucleotide exchange. Immobilization of the converter enables RuvB to convert the ATP-contained energy into a lever motion, pulling 2 nucleotides of DNA out of the RuvA tetramer per ATP hydrolyzed, thus driving DNA branch migration. The RuvB motors rotate together with the DNA substrate, which together with the progressing nucleotide cycle form the mechanistic basis for DNA recombination by continuous HJ branch migration. Branch migration allows RuvC to scan DNA until it finds its consensus sequence, where it cleaves and resolves cruciform DNA. This Bacillus cereus (strain ATCC 14579 / DSM 31 / CCUG 7414 / JCM 2152 / NBRC 15305 / NCIMB 9373 / NCTC 2599 / NRRL B-3711) protein is Holliday junction branch migration complex subunit RuvB.